A 355-amino-acid polypeptide reads, in one-letter code: Ataxin-3 (355 aa).

A Peptide (Met-Gly) (interchain with G-Cter in ubiquitin) cross-link involves residue Met1. The 180-residue stretch at 1 to 180 (MESIFHEKQE…DCEADQLLQM (180 aa)) folds into the Josephin domain. The active-site Nucleophile is Cys14. His119 acts as the Proton acceptor in catalysis. The active site involves Asn134. Residue Lys200 forms a Glycyl lysine isopeptide (Lys-Gly) (interchain with G-Cter in ubiquitin) linkage. UIM domains follow at residues 224–243 (DDED…IDME) and 244–263 (DEEA…SSRG). Positions 257 to 333 (MQGSSRGMCE…AGNAMSEEDV (77 aa)) are disordered. Residues Ser268, Ser272, and Ser273 each carry the phosphoserine modification. The span at 279–301 (EELRKRREAYFEKQQHQQQEADR) shows a compositional bias: basic and acidic residues. The span at 312–326 (PTTSSGGLRSNQAGN) shows a compositional bias: polar residues. Ser321 bears the Phosphoserine mark. A UIM 3 domain is found at 329 to 348 (SEEDVLRATVTVSLETAKDS).

In terms of assembly, interacts with STUB1/CHIP (when monoubiquitinated). Interacts with DNA repair proteins RAD23A and RAD23B. Interacts with BECN1 (via its poly-Gln domain). Interacts with PRKN, UBR2, VCP and tubulin. Post-translationally, monoubiquitinated by UBE2W, possibly leading to activate the deubiquitinating enzyme activity. In terms of tissue distribution, ubiquitously expressed.

Its subcellular location is the nucleus matrix. The protein localises to the nucleus. The protein resides in the lysosome membrane. The catalysed reaction is Thiol-dependent hydrolysis of ester, thioester, amide, peptide and isopeptide bonds formed by the C-terminal Gly of ubiquitin (a 76-residue protein attached to proteins as an intracellular targeting signal).. Deubiquitinating enzyme involved in protein homeostasis maintenance, transcription, cytoskeleton regulation, myogenesis and degradation of misfolded chaperone substrates. Binds long polyubiquitin chains and trims them, while it has weak or no activity against chains of 4 or less ubiquitins. Involved in degradation of misfolded chaperone substrates via its interaction with STUB1/CHIP: recruited to monoubiquitinated STUB1/CHIP, and restricts the length of ubiquitin chain attached to STUB1/CHIP substrates and preventing further chain extension. Interacts with key regulators of transcription and represses transcription: acts as a histone-binding protein that regulates transcription. Acts as a negative regulator of mTORC1 signaling in response to amino acid deprivation by mediating deubiquitination of RHEB, thereby promoting RHEB inactivation by the TSC-TBC complex. Regulates autophagy via the deubiquitination of 'Lys-402' of BECN1 leading to the stabilization of BECN1. The polypeptide is Ataxin-3 (Atxn3) (Rattus norvegicus (Rat)).